Here is a 145-residue protein sequence, read N- to C-terminus: Large ribosomal subunit protein uL13 (145 aa).

It belongs to the universal ribosomal protein uL13 family. Part of the 50S ribosomal subunit.

In terms of biological role, this protein is one of the early assembly proteins of the 50S ribosomal subunit, although it is not seen to bind rRNA by itself. It is important during the early stages of 50S assembly. This chain is Large ribosomal subunit protein uL13, found in Listeria innocua serovar 6a (strain ATCC BAA-680 / CLIP 11262).